The following is a 497-amino-acid chain: Phenylalanine--tRNA ligase alpha subunit (497 aa).

L-phenylalanine is bound by residues T329, 372-374 (QIE), and Y412. E414 contacts Mg(2+). F438 provides a ligand contact to L-phenylalanine.

The protein belongs to the class-II aminoacyl-tRNA synthetase family. Phe-tRNA synthetase alpha subunit type 2 subfamily. As to quaternary structure, heterotetramer; dimer of two heterodimers formed by alpha and beta subunits. Mg(2+) is required as a cofactor.

It is found in the cytoplasm. It catalyses the reaction tRNA(Phe) + L-phenylalanine + ATP = L-phenylalanyl-tRNA(Phe) + AMP + diphosphate + H(+). This is Phenylalanine--tRNA ligase alpha subunit (farsa) from Danio rerio (Zebrafish).